Here is a 394-residue protein sequence, read N- to C-terminus: Phenylalanine 4-monooxygenase, chloroplastic (394 aa).

The transit peptide at 1 to 79 directs the protein to the chloroplast; the sequence is MAMEVGYLRH…LNQIQAVSTA (79 aa). Positions 75 to 97 are disordered; sequence AVSTAEKEREADKTSTPPIPSSI. Fe cation is bound by residues H252, H257, and E297.

This sequence belongs to the biopterin-dependent aromatic amino acid hydroxylase family. In terms of assembly, forms monomers. The cofactor is Fe(2+).

The protein resides in the plastid. It is found in the chloroplast. It carries out the reaction (6R)-L-erythro-5,6,7,8-tetrahydrobiopterin + L-phenylalanine + O2 = (4aS,6R)-4a-hydroxy-L-erythro-5,6,7,8-tetrahydrobiopterin + L-tyrosine. In terms of biological role, catalyzes the hydroxylation of L-phenylalanine to L-tyrosine. Does not seem to be tetrahydropterin-dependent and shows preference for 10-formyltetrahydrofolate as cosubstrate and electron donor. In Physcomitrium patens (Spreading-leaved earth moss), this protein is Phenylalanine 4-monooxygenase, chloroplastic.